The primary structure comprises 110 residues: uncharacterized protein (110 aa).

May play a regulatory role in sulfomenaquinone (SMK) biosynthesis. This is an uncharacterized protein from Mycobacterium bovis (strain ATCC BAA-935 / AF2122/97).